Consider the following 967-residue polypeptide: Phosphatidylserine decarboxylase proenzyme 3 (967 aa).

Residues 217–255 (FIAEPDSSIPPSESSVSISTDTGKETPPSKSKKSSNQPY) form a disordered region. A compositionally biased stretch (low complexity) spans 220–237 (EPDSSIPPSESSVSISTD). The C2 domain occupies 250-373 (SSNQPYVSIG…SSAQVDPETG (124 aa)). Residues D343, S346, and D349 each coordinate Ca(2+). Residues 532–544 (DQQATQTPQSPSS) are compositionally biased toward low complexity. Residues 532–566 (DQQATQTPQSPSSNEESGPGTPTQTSDQYEDSEDS) form a disordered region. The span at 545–558 (NEESGPGTPTQTSD) shows a compositional bias: polar residues. Active-site charge relay system; for autoendoproteolytic cleavage activity residues include D769, H825, and S912. The active-site Schiff-base intermediate with substrate; via pyruvic acid; for decarboxylase activity is S912. Residue S912 is modified to Pyruvic acid (Ser); by autocatalysis. Residues 947-967 (IGQKIDPNKPTDAEDHSKSDS) form a disordered region.

This sequence belongs to the phosphatidylserine decarboxylase family. PSD-B subfamily. Eukaryotic type II sub-subfamily. As to quaternary structure, heterodimer of a large membrane-associated beta subunit and a small pyruvoyl-containing alpha subunit. Pyruvate is required as a cofactor. Ca(2+) serves as cofactor. Post-translationally, is synthesized initially as an inactive proenzyme. Formation of the active enzyme involves a self-maturation process in which the active site pyruvoyl group is generated from an internal serine residue via an autocatalytic post-translational modification. Two non-identical subunits are generated from the proenzyme in this reaction, and the pyruvate is formed at the N-terminus of the alpha chain, which is derived from the carboxyl end of the proenzyme. The autoendoproteolytic cleavage occurs by a canonical serine protease mechanism, in which the side chain hydroxyl group of the serine supplies its oxygen atom to form the C-terminus of the beta chain, while the remainder of the serine residue undergoes an oxidative deamination to produce ammonia and the pyruvoyl prosthetic group on the alpha chain. During this reaction, the Ser that is part of the protease active site of the proenzyme becomes the pyruvoyl prosthetic group, which constitutes an essential element of the active site of the mature decarboxylase.

The protein localises to the golgi apparatus membrane. Its subcellular location is the endosome membrane. It localises to the cytoplasm. The enzyme catalyses a 1,2-diacyl-sn-glycero-3-phospho-L-serine + H(+) = a 1,2-diacyl-sn-glycero-3-phosphoethanolamine + CO2. Its pathway is phospholipid metabolism; phosphatidylethanolamine biosynthesis; phosphatidylethanolamine from CDP-diacylglycerol: step 2/2. Its function is as follows. Catalyzes the formation of phosphatidylethanolamine (PtdEtn) from phosphatidylserine (PtdSer). Plays a central role in phospholipid metabolism and in the interorganelle trafficking of phosphatidylserine. Together with psd1 and psd2, responsible for the majority of phosphatidylethanolamine synthesis. This is Phosphatidylserine decarboxylase proenzyme 3 from Schizosaccharomyces pombe (strain 972 / ATCC 24843) (Fission yeast).